Here is a 238-residue protein sequence, read N- to C-terminus: Uridylate kinase (238 aa).

12–15 provides a ligand contact to ATP; sequence KLSG. Glycine 54 is a UMP binding site. Residues glycine 55 and arginine 59 each contribute to the ATP site. UMP is bound by residues aspartate 74 and 135 to 142; that span reads TGNPFFTT. Positions 162, 163, 168, and 171 each coordinate ATP.

The protein belongs to the UMP kinase family. Homohexamer.

The protein resides in the cytoplasm. The enzyme catalyses UMP + ATP = UDP + ADP. The protein operates within pyrimidine metabolism; CTP biosynthesis via de novo pathway; UDP from UMP (UMPK route): step 1/1. Inhibited by UTP. Functionally, catalyzes the reversible phosphorylation of UMP to UDP. In Rhodopseudomonas palustris (strain BisA53), this protein is Uridylate kinase.